The primary structure comprises 222 residues: MLWALFFLVTTIHAELCHPDAENAFKVRLSIRAALGDKAYVWDTDQEYLFRAMVAFSMRKVPNREATEISHVLLCNITQRVSFWFVVTDPSNNYTLPAAEVQSAIRKNRNRINSAFFLDDHTLEFLKIPSTLAPPMEPSVPVWIIVFGVIFCIVTVAIALLVLSGIRQRRRNNKGPPGVEDAEDKCENIITIENGIPCDPLDMKGGHINDGFLTEDERLTPL.

A signal peptide spans M1–A14. At E15–P141 the chain is on the extracellular side. One can recognise a Collectrin-like domain in the interval A21 to L222. 2 N-linked (GlcNAc...) asparagine glycosylation sites follow: N76 and N93. Residues V142 to V162 traverse the membrane as a helical segment. The Cytoplasmic segment spans residues L163–L222. 2 positions are modified to phosphothreonine: T214 and T220.

This sequence belongs to the CLTRN family. Monomer. Homodimer. Homodimer; dimerization prevents CLTRN cleavage by BACE2. Interacts with SNAPIN. Interacts with SLC6A18; this interaction regulates the trafficking of SLC6A18 to the cell membrane and its amino acid transporter activity. Interacts with SLC6A19; this interaction regulates the trafficking of SLC6A19 to the cell membrane and its amino acid transporter activity. Interacts with SLC6A20B. Post-translationally, glycosylated. Glycosylation is required for plasma membrane localization and for its cleavage by BACE2. Proteolytically processed in pancreatic beta cells by BACE2 leading to the generation and extracellular release of soluble CLTRN, and a corresponding cell-associated C-terminal fragment which is later cleaved by gamma-secretase. This shedding process inactivates CLTRN. Three cleavage sites have been identified for BACE2, two clustered sites after Phe-116 and Leu-118 and a more membrane proximal site at Phe-125; the preferred BACE2 cleavage site seems to be between Phe-125 and Leu-126, Phe-116 and Leu-118 act as alternative sites. Expressed on the apical surface of the proximal tubules in the renal cortex (at protein level). Kidney; collecting ducts and proximal tubule. Pancreas; beta cells of islets. Expressed in the cerebral cortex, hippocampus, brainstem and cerebellum.

The protein resides in the cell membrane. Functionally, plays an important role in amino acid transport by acting as binding partner of amino acid transporters SLC6A18 and SLC6A19, regulating their trafficking on the cell surface and their activity. May also play a role in trafficking of amino acid transporters SLC3A1 and SLC7A9 to the renal cortical cell membrane. Regulator of SNARE complex function. Stimulator of beta cell replication. The polypeptide is Collectrin (Mus musculus (Mouse)).